We begin with the raw amino-acid sequence, 337 residues long: MHDESRTKQISSIKALLKKWEHEYVHTNNCKPSKEDVKKQPEIALLYKQYYELKRESSITPKKAKTKVDFKFQTPTKQRAETEANESPKAPRNDYLQVTPKTVDKSLLGPTPQLSRRVLNLLEDMSPIADSHVDQISDIKHNTSEISSTMIPTTPSKNPEPVAQHTPTVLETPSSYRLQVYTSPNLLRVNAPCRKSLSEMLRELKDIEDDYGSNEEKILQEFESFSSSSSESLVDRDISQPMKKKIKRQNRLVKLPPSMNLSKSHLEGLPEIDEDAENGIDDNEDTTASKDSSPFLDLQSERQNKKIMRNGLVIGKQVSQNYSSYKLKKRKFRRHRS.

2 positions are modified to phosphothreonine; by cdc2: Thr-60 and Thr-74. The disordered stretch occupies residues 71 to 97 (KFQTPTKQRAETEANESPKAPRNDYLQ). Phosphoserine; by cdc2 is present on Ser-87. 2 positions are modified to phosphothreonine; by cdc2: Thr-99 and Thr-154. Phosphoserine is present on Ser-183. Residues 258–302 (SMNLSKSHLEGLPEIDEDAENGIDDNEDTTASKDSSPFLDLQSER) are disordered. Residues 270-285 (PEIDEDAENGIDDNED) are compositionally biased toward acidic residues.

The protein belongs to the SLD2 family. In terms of assembly, interacts with rad4. Phosphorylated by cdc2 at the onset of S-phase.

The protein localises to the cytoplasm. It localises to the nucleus. Its function is as follows. Has a role in the initiation of DNA replication. Required at S-phase checkpoint. The chain is DNA replication regulator sld2 (drc1) from Schizosaccharomyces pombe (strain 972 / ATCC 24843) (Fission yeast).